Reading from the N-terminus, the 666-residue chain is UvrABC system protein B (666 aa).

A Helicase ATP-binding domain is found at 25–412 (NGIKNNNKWQ…SENIAEQVIR (388 aa)). 38–45 (GVTGSGKT) lines the ATP pocket. The Beta-hairpin signature appears at 91–114 (YYDYYQPEAYVAQTDTYIEKDASI). Residues 429 to 595 (QIDDLYSEIK…TIKKAVRDVI (167 aa)) enclose the Helicase C-terminal domain. Residues 622 to 657 (DKLIKEFEKEMKEAAKELQFEKAAYFRDKVNELKKK) form the UVR domain.

It belongs to the UvrB family. In terms of assembly, forms a heterotetramer with UvrA during the search for lesions. Interacts with UvrC in an incision complex.

The protein resides in the cytoplasm. The UvrABC repair system catalyzes the recognition and processing of DNA lesions. A damage recognition complex composed of 2 UvrA and 2 UvrB subunits scans DNA for abnormalities. Upon binding of the UvrA(2)B(2) complex to a putative damaged site, the DNA wraps around one UvrB monomer. DNA wrap is dependent on ATP binding by UvrB and probably causes local melting of the DNA helix, facilitating insertion of UvrB beta-hairpin between the DNA strands. Then UvrB probes one DNA strand for the presence of a lesion. If a lesion is found the UvrA subunits dissociate and the UvrB-DNA preincision complex is formed. This complex is subsequently bound by UvrC and the second UvrB is released. If no lesion is found, the DNA wraps around the other UvrB subunit that will check the other stand for damage. The sequence is that of UvrABC system protein B from Clostridium acetobutylicum (strain ATCC 824 / DSM 792 / JCM 1419 / IAM 19013 / LMG 5710 / NBRC 13948 / NRRL B-527 / VKM B-1787 / 2291 / W).